Reading from the N-terminus, the 172-residue chain is Shikimate kinase (172 aa).

11–16 (GSGKTT) lines the ATP pocket. Threonine 15 is a Mg(2+) binding site. Substrate is bound by residues aspartate 33, arginine 57, and glycine 79. An ATP-binding site is contributed by arginine 117. Residue arginine 136 participates in substrate binding.

It belongs to the shikimate kinase family. As to quaternary structure, monomer. Requires Mg(2+) as cofactor.

Its subcellular location is the cytoplasm. The enzyme catalyses shikimate + ATP = 3-phosphoshikimate + ADP + H(+). It functions in the pathway metabolic intermediate biosynthesis; chorismate biosynthesis; chorismate from D-erythrose 4-phosphate and phosphoenolpyruvate: step 5/7. Functionally, catalyzes the specific phosphorylation of the 3-hydroxyl group of shikimic acid using ATP as a cosubstrate. The protein is Shikimate kinase of Caldicellulosiruptor saccharolyticus (strain ATCC 43494 / DSM 8903 / Tp8T 6331).